The primary structure comprises 384 residues: 5-cytosine rRNA methyltransferase NSUN4 (384 aa).

A mitochondrion-targeting transit peptide spans M1–Q25. Residues G185, G186, K187, and D204 each coordinate S-adenosyl-L-methionine. S206 is modified (phosphoserine). Positions 209, 237, 238, and 255 each coordinate S-adenosyl-L-methionine. C310 serves as the catalytic Nucleophile.

Belongs to the class I-like SAM-binding methyltransferase superfamily. RsmB/NOP family. In terms of assembly, heterodimer with MTERFD2/MTERF4; this interaction seems to be required for NSUN4 recruitment to the mitochondrial large ribosomal subunit.

The protein localises to the mitochondrion. The enzyme catalyses a cytidine in rRNA + S-adenosyl-L-methionine = a 5-methylcytidine in rRNA + S-adenosyl-L-homocysteine + H(+). It catalyses the reaction a cytidine in mRNA + S-adenosyl-L-methionine = a 5-methylcytidine in mRNA + S-adenosyl-L-homocysteine + H(+). Mitochondrial RNA cytosine C(5)-methyltransferase that methylates cytosine to 5-methylcytosine (m5C) in various RNAs, such as rRNAs, mRNAs and some long non-coding RNAs (lncRNAs). Involved in mitochondrial ribosome small subunit (SSU) maturation by catalyzing methylation of mitochondrial 12S rRNA; the function is independent of MTERFD2/MTERF4 and assembled mitochondrial ribosome large subunit (LSU). Targeted to LSU by MTERFD2/MTERF4 and probably is involved in a final step in ribosome biogenesis to ensure that SSU and LSU are assembled. In vitro can methylate 16S rRNA of the LSU; the methylation is enhanced by MTERFD/MTERF4. Also acts as a regulator of innate immunity by marking double-stranded mitochondrial RNAs(mt-dsRNAs) generated in response to stress: catalyzes m5C modification on mitochondrial RNAs, such as a mRNAs and lncRNAs, with a preference for the termini of light-strand lncRNAs, promoting their degradation and cytosolic release. Modified light-strand lncRNAs are then recognized by C1QBP reader and recruited to the mitochondrial degradosome complex, which promotes their degradation. This is 5-cytosine rRNA methyltransferase NSUN4 (NSUN4) from Bos taurus (Bovine).